We begin with the raw amino-acid sequence, 194 residues long: Imidazoleglycerol-phosphate dehydratase (194 aa).

The protein belongs to the imidazoleglycerol-phosphate dehydratase family.

The protein localises to the cytoplasm. The enzyme catalyses D-erythro-1-(imidazol-4-yl)glycerol 3-phosphate = 3-(imidazol-4-yl)-2-oxopropyl phosphate + H2O. Its pathway is amino-acid biosynthesis; L-histidine biosynthesis; L-histidine from 5-phospho-alpha-D-ribose 1-diphosphate: step 6/9. The sequence is that of Imidazoleglycerol-phosphate dehydratase from Methanothermobacter thermautotrophicus (strain ATCC 29096 / DSM 1053 / JCM 10044 / NBRC 100330 / Delta H) (Methanobacterium thermoautotrophicum).